Here is a 334-residue protein sequence, read N- to C-terminus: Siroheme decarboxylase (334 aa).

H93 is an active-site residue.

Belongs to the Ahb/Nir family.

It catalyses the reaction siroheme + 2 H(+) = 12,18-didecarboxysiroheme + 2 CO2. It functions in the pathway porphyrin-containing compound metabolism. In terms of biological role, involved in heme d1 biosynthesis. Catalyzes the decarboxylation of siroheme into didecarboxysiroheme. Siroheme is probably decarboxylated to monodecarboxysiroheme, which is in turn decarboxylated to didecarboxysiroheme. This Hydrogenobacter thermophilus (strain DSM 6534 / IAM 12695 / TK-6) protein is Siroheme decarboxylase.